Reading from the N-terminus, the 259-residue chain is MLFTLKKVIGNMLLPLPLMLLIIGAGLALLWFSRFQKTGKIFISIGWLALLLLSLQPVADRLLRPIESTYPTWNNSQKVDYIVVLGGGYTWNPQWAPSSNLINNSLPRLNEGIRLWRENPGSKLIFTGGVAKTNTVSTAEVGARVAQSLGVPREQIITLDLPKDTEEEAAAVKQAIGDAPFLLVTSASHLPRAMIFFQQEGLNPLPAPANQLAIDSPLNPWERAIPSPVWLMHSDRVGYETLGRIWQWLKGSSGEPRQE.

Transmembrane regions (helical) follow at residues 12-32 and 39-59; these read MLLP…LLWF and GKIF…QPVA.

The protein resides in the cell inner membrane. Its function is as follows. Plays a critical role in the metabolism of the essential lipid carrier used for cell wall synthesis. This Escherichia coli O157:H7 protein is Envelope biogenesis factor ElyC (elyC).